The chain runs to 224 residues: Urease accessory protein UreF (224 aa).

The protein belongs to the UreF family. As to quaternary structure, ureD, UreF and UreG form a complex that acts as a GTP-hydrolysis-dependent molecular chaperone, activating the urease apoprotein by helping to assemble the nickel containing metallocenter of UreC. The UreE protein probably delivers the nickel.

The protein localises to the cytoplasm. Functionally, required for maturation of urease via the functional incorporation of the urease nickel metallocenter. The chain is Urease accessory protein UreF from Pseudomonas fluorescens (strain SBW25).